A 437-amino-acid chain; its full sequence is Ribosomal protein uS12 methylthiotransferase RimO (437 aa).

Residues 3–114 (ATIAVTHLGC…IVEVVERSRT (112 aa)) form the MTTase N-terminal domain. [4Fe-4S] cluster contacts are provided by Cys12, Cys48, Cys77, Cys152, Cys156, and Cys159. In terms of domain architecture, Radical SAM core spans 138 to 367 (TTTEAVAYLK…MRLQQTISQR (230 aa)). The 67-residue stretch at 370-436 (ASQVGRVVPV…PYDLCGEVFQ (67 aa)) folds into the TRAM domain.

This sequence belongs to the methylthiotransferase family. RimO subfamily. The cofactor is [4Fe-4S] cluster.

The protein resides in the cytoplasm. The catalysed reaction is L-aspartate(89)-[ribosomal protein uS12]-hydrogen + (sulfur carrier)-SH + AH2 + 2 S-adenosyl-L-methionine = 3-methylsulfanyl-L-aspartate(89)-[ribosomal protein uS12]-hydrogen + (sulfur carrier)-H + 5'-deoxyadenosine + L-methionine + A + S-adenosyl-L-homocysteine + 2 H(+). In terms of biological role, catalyzes the methylthiolation of an aspartic acid residue of ribosomal protein uS12. This Gloeobacter violaceus (strain ATCC 29082 / PCC 7421) protein is Ribosomal protein uS12 methylthiotransferase RimO.